The sequence spans 719 residues: Forkhead box protein K1 (719 aa).

Residue alanine 2 is modified to N-acetylalanine. The tract at residues 2-40 (AEVGEDSGARALLALRSAPCSPVLCAAAAAAAFPATTSP) is interaction with SIN3A and SIN3B. Residues 35–67 (PATTSPPPPAQPPPGPPALPAEPGPGPVPSTVA) form a disordered region. A compositionally biased stretch (pro residues) spans 38–62 (TSPPPPAQPPPGPPALPAEPGPGPV). A required for interaction with FOXO4 and MEF2C region spans residues 81–406 (AASVRQSPGP…PLSSRSAPAS (326 aa)). Phosphoserine is present on serine 87. The FHA domain maps to 109–161 (VTIGRNSSQGSVDLSMGLSSFISRRHLQLSFQEPHFYLRCLGKNGVFVDGAFQ). 2 positions are modified to omega-N-methylarginine: arginine 147 and arginine 177. Residues serine 199, serine 209, serine 225, and serine 229 each carry the phosphoserine modification. A phosphothreonine mark is found at threonine 231 and threonine 233. 4 positions are modified to phosphoserine: serine 239, serine 243, serine 281, and serine 285. The fork-head DNA-binding region spans 291–386 (KPPYSYAQLI…EQAFRKRRQR (96 aa)). A disordered region spans residues 399-443 (SSRSAPASPTHPGLMSPRSSGLQTPECLSREGSPIPHDPDLGSKL). Residues serine 402 and serine 406 each carry the phosphoserine modification. The residue at position 408 (threonine 408) is a Phosphothreonine. Serine 414 is modified (phosphoserine). The residue at position 422 (threonine 422) is a Phosphothreonine. Phosphoserine occurs at positions 427, 431, and 445. Positions 665 to 685 (AANAAPTPAASTTTSASSSGE) are enriched in low complexity. Positions 665-719 (AANAAPTPAASTTTSASSSGEPEVKRSRVEEPGGTATTQPTAMAATGPQGPGTGE) are disordered. The span at 686–695 (PEVKRSRVEE) shows a compositional bias: basic and acidic residues. A compositionally biased stretch (low complexity) spans 696–712 (PGGTATTQPTAMAATGP).

Interacts with SIN3A and SIN3B (via PAH2) to form a complex which represses transcription. Component of SIN3A-, but not SIN3B-, containing multiprotein complexes. Interacts with FOXO4 and MEF2C; both interactions inhibit FOXO4 and MEF2C transactivation activity. Interacts (when phosphorylated) with YWHAE/14-3-3-epsilon; promotes sequestration in the cytoplasm and leads to impaired ability to bind DNA. Interacts with FHL2. Interacts with SRF. Interacts with DVL2 and DVL3; the interaction induces DVL2 nuclear translocation. Interacts with BAP1 (when phosphorylated). Accessory component of the polycomb repressive deubiquitinase (PR-DUB) complex, at least composed of BAP1, one of ASXL1, ASXL2 or (probably) ASXL3 and one of MBD5 or MBD6. The PR-DUB core associates with a number of accessory proteins, including FOXK1, FOXK2, KDM1B, HCFC1 and OGT. Phosphorylation by GSK3 (GSK3A or GSK3B) promotes interaction with YWHAE/14-3-3-epsilon and retention in the cytoplasm. In response to mTORC1 signaling, phosphorylation by GSK3 is prevented, leading to translocation to the nucleus. As to expression, expressed in tissues and cells in which the myoglobin gene is transcriptionally active including cardiac and skeletal myocytes, brain and kidney. In the adult brain, expressed in the piriform cortex and the indusium griseum. In the hippocampus, expression is localized to the dentate gyrus and CA3 area. In the cerebellum, expression is confined to the Purkinje cell layer. Present in neuroretinal cells: expressed in rod bipolar cells, amacrine cells and ganglion cells (at protein level).

The protein localises to the nucleus. The protein resides in the cytoplasm. Transcriptional regulator involved in different processes such as glucose metabolism, aerobic glycolysis, muscle cell differentiation and autophagy. Recognizes and binds the forkhead DNA sequence motif (5'-GTAAACA-3') and can both act as a transcription activator or repressor, depending on the context. Together with FOXK2, acts as a key regulator of metabolic reprogramming towards aerobic glycolysis, a process in which glucose is converted to lactate in the presence of oxygen. Acts by promoting expression of enzymes for glycolysis (such as hexokinase-2 (HK2), phosphofructokinase, pyruvate kinase (PKLR) and lactate dehydrogenase), while suppressing further oxidation of pyruvate in the mitochondria by up-regulating pyruvate dehydrogenase kinases PDK1 and PDK4. Probably plays a role in gluconeogenesis during overnight fasting, when lactate from white adipose tissue and muscle is the main substrate. Involved in mTORC1-mediated metabolic reprogramming: in response to mTORC1 signaling, translocates into the nucleus and regulates the expression of genes associated with glycolysis and downstream anabolic pathways, such as HIF1A, thereby regulating glucose metabolism. Together with FOXK2, acts as a negative regulator of autophagy in skeletal muscle: in response to starvation, enters the nucleus, binds the promoters of autophagy genes and represses their expression, preventing proteolysis of skeletal muscle proteins. Acts as a transcriptional regulator of the myogenic progenitor cell population in skeletal muscle. Binds to the upstream enhancer region (CCAC box) of myoglobin (MB) gene, regulating the myogenic progenitor cell population. Promotes muscle progenitor cell proliferation by repressing the transcriptional activity of FOXO4, thereby inhibiting myogenic differentiation. Involved in remodeling processes of adult muscles that occur in response to physiological stimuli. Required to correct temporal orchestration of molecular and cellular events necessary for muscle repair. Represses myogenic differentiation by inhibiting MEFC activity. Positively regulates Wnt/beta-catenin signaling by translocating DVL into the nucleus. Reduces virus replication, probably by binding the interferon stimulated response element (ISRE) to promote antiviral gene expression. Accessory component of the polycomb repressive deubiquitinase (PR-DUB) complex; recruits the PR-DUB complex to specific FOXK1-bound genes. This chain is Forkhead box protein K1, found in Mus musculus (Mouse).